Consider the following 332-residue polypeptide: Methylthioribose-1-phosphate isomerase (332 aa).

Substrate is bound by residues 44-46 (RGA), R87, and Q192. Residue D233 is the Proton donor of the active site. Substrate is bound at residue 243 to 244 (NK).

It belongs to the eIF-2B alpha/beta/delta subunits family. MtnA subfamily.

It carries out the reaction 5-(methylsulfanyl)-alpha-D-ribose 1-phosphate = 5-(methylsulfanyl)-D-ribulose 1-phosphate. It participates in amino-acid biosynthesis; L-methionine biosynthesis via salvage pathway; L-methionine from S-methyl-5-thio-alpha-D-ribose 1-phosphate: step 1/6. In terms of biological role, catalyzes the interconversion of methylthioribose-1-phosphate (MTR-1-P) into methylthioribulose-1-phosphate (MTRu-1-P). This Dehalococcoides mccartyi (strain CBDB1) protein is Methylthioribose-1-phosphate isomerase.